Consider the following 161-residue polypeptide: Cystatin cpi-2 (161 aa).

A signal peptide spans 1-25 (MMSTMSIKEGLLVILLSLFLFDTTA). The Important for interaction with host LGMN motif lies at 76–78 (SND). N89 carries N-linked (GlcNAc...) asparagine glycosylation. Positions 93–97 (QVVAG) match the Secondary area of contact motif. A disulfide bridge links C111 with C124.

This sequence belongs to the cystatin family.

Functionally, cysteine protease inhibitor which inhibits members of the peptidase C1 family. Also acts as an asparaginyl endopeptidase inhibitor. In the human host, inhibits CTSL/cathepsin L, CTSS/cathepsin S, CTSB/cathepsin B and asparaginyl endopeptidase LGMN/AEP which may cause defects in both antigen and MHC class II invariant chain CD74/Ii processing. In Brugia malayi (Filarial nematode worm), this protein is Cystatin cpi-2.